A 219-amino-acid polypeptide reads, in one-letter code: Tegument protein UL14 (219 aa).

The disordered stretch occupies residues 159-219 (VHTDAPSRPG…GFARDCPDGE (61 aa)). The span at 186-202 (APPPETAPSPEPAPGPA) shows a compositional bias: pro residues.

This sequence belongs to the alphaherpesvirinae HHV-1 UL14 protein family. Post-translationally, phosphorylated.

The protein localises to the virion tegument. Its subcellular location is the host cytoplasm. The protein resides in the host nucleus. Contributes to the nuclear transport of the viral transcriptional activator VP16 during the early phase of infection. Therefore, participates indirectly in the regulation of the immediate-early gene expression. Additionally, seems to be important for efficient nuclear targeting of capsids. The chain is Tegument protein UL14 from Human herpesvirus 2 (strain HG52) (HHV-2).